A 313-amino-acid polypeptide reads, in one-letter code: MATVNHTNCNTASPAALEEAKTSGGLRSPQIAHEPHDFGGSQLLPSGQEIQSEDEGTVPAGDGSSCNIRGSRTQSPGGCSVEAVLARKKHRRRPSKRKRHWRPYLELSWAEKQQRDERQSQRASRVREEMFAKGQPLAPYNTTQFLMNDRDLEEPNLDVLHGPSHSGSGGENEAGDSDGQGRAHGEFQQRDFSEAYERYHTESLQGRSKQELVRDYLDLERRLSQAEQETRRLRQLQGCSSRQPCQQVEELAAEVERLRTENQRLRQENEMWNREGGYCDQEKPASEGTPWPKVEAPFQTHTGQLGHREAGDR.

The segment covering 1–13 has biased composition (polar residues); sequence MATVNHTNCNTAS. A disordered region spans residues 1–78; sequence MATVNHTNCN…RGSRTQSPGG (78 aa). Residues S28, S52, S75, and S80 each carry the phosphoserine modification. Polar residues predominate over residues 64 to 77; that stretch reads SSCNIRGSRTQSPG. 3 disordered regions span residues 111–139, 155–194, and 267–313; these read EKQQ…PLAP, PNLD…DFSE, and QENE…AGDR. Over residues 112-131 the composition is skewed to basic and acidic residues; the sequence is KQQRDERQSQRASRVREEMF. The segment at 139–142 is interaction with P-TEFb; the sequence is PYNT. Over residues 179-194 the composition is skewed to basic and acidic residues; it reads GQGRAHGEFQQRDFSE. The stretch at 207-276 forms a coiled coil; it reads RSKQELVRDY…QENEMWNREG (70 aa). The tract at residues 225 to 286 is interaction with CCNT1, HEXIM1 and HEXIM2; sequence QAEQETRRLR…GYCDQEKPAS (62 aa).

Belongs to the HEXIM family. In terms of assembly, homooligomer and heterooligomer with HEXIM1; probably dimeric. Core component of the 7SK RNP complex, at least composed of 7SK RNA, LARP7, MEPCE, HEXIM1 (or HEXIM2) and P-TEFb (composed of CDK9 and CCNT1/cyclin-T1). Interacts with CCNT2.

It localises to the nucleus. Functionally, transcriptional regulator which functions as a general RNA polymerase II transcription inhibitor. Core component of the 7SK RNP complex: in cooperation with 7SK snRNA sequesters P-TEFb in a large inactive 7SK snRNP complex preventing RNA polymerase II phosphorylation and subsequent transcriptional elongation. The sequence is that of Protein HEXIM2 (Hexim2) from Mus musculus (Mouse).